The following is a 13477-amino-acid chain: Mucin-3B (13477 aa).

A signal peptide spans 1–21 (MQLLGLLSILWMLKSSPGATG). Positions 219 to 234 (TISSTTRTTERTPLPT) are enriched in low complexity. Disordered regions lie at residues 219–243 (TISSTTRTTERTPLPTGSIHTTMSP), 327–347 (TRSTPTSETTYPASPTSTVTD), 360–383 (GTLSPTTTLPPTSSSQQTTETPMT), 513–559 (SMTT…PSTL), 622–643 (ATTPTTNLGNTTTETTSHSTPS), 815–839 (TTTNSFTTSANMEPPSTAVATTGTG), 923–968 (TSQT…STTE), 1154–1179 (PSMSASNDRTTHTESISSPPASTSTL), 1480–1511 (SPTVQNTETSSFVSMTSATTPSERPTFTSTEN), 1529–1601 (SISA…FPET), 1619–1638 (MTSTPPITSSVTPTNTVTSM), 1692–1714 (TTSTPTSETTYSTSPTSTVTDSM), 1944–1968 (TTSATMEPPSSSVAATDTGQTTFTS), 2064–2123 (TPNA…IAKS), 2170–2197 (STSMTPSTVSTSIPTSQPKTVNSSSGGI), 2275–2308 (SSSMSESSAGTTHTESISSPPATTSTLHTTAEST), 2442–2462 (RSTPTSETTYPTSPTSTVKGS), 2476–2497 (LSMETSLPPTSSSLPTTETATT), 2509–2537 (SHSTPSFSSSTIHSTVSTPTTVISSGPPT), 2591–2610 (SAMSTSDIPSSPSIQNTETS), 2672–2717 (TSTL…FSSS), 2812–2832 (TTITRSTPTSETTYPISSTST), 2845–2867 (TMTETSSSATSLPLTSPLVSTTE), 2922–2947 (SRIPSSLSTDIPTSQPTTITPSSVGI), 3074–3109 (ETPSSTVATTGTGQTTFTSSTATSPETNTLTPTPDI), 3309–3395 (TTSH…NSNS), 3420–3481 (ITTT…SHST), 3545–3565 (STTSFTSSTATTETTSRSTPS), 3654–3727 (SITT…STTA), 3740–3812 (ITTI…TTAE), 4014–4047 (TETTSRSTPSYTSAITTTETTSHRTPSFTSSIAT), 4067–4106 (TSNSTASLTSSMTTTETTSHSTPSLTSSMTATETTSHSTP), 4182–4249 (TTET…SSIT), 4269–4313 (NSTS…PSFT), 4510–4530 (SHSTPSFNSSITTTETLSHST), 4557–4617 (TETT…STSS), 4630–4651 (YSPSSFTSSITTTESPSHSTPS), 4802–4830 (TSSFTSSITSTETTSHSTPSLTSSITATG), 4953–4986 (HSLPSFTSSSTTTETPSHSPPGFSSSIATSKTIS), 5128–5203 (YTSS…ITTT), 5455–5486 (ITNTESTSRSTPSFTFSTTSTETTSHSTPSFT), 5627–5680 (TTKT…ATSK), 5834–5908 (TTSY…HSPP), 5957–5977 (STPSFTSSITTTETTSQSSPS), 5990–6017 (HSTASFTSSITTTETTSHSTRSITSSIT), 6030–6080 (TSSI…PPIF), 6120–6150 (TTETNSHSPPSFTSSIATTETPSHSPPSFTS), 6172–6197 (TESTSHSTPSFTSSIATTETTSHTPP), 6456–6481 (TETPSHSTPSFPSSITTTQSASHSTP), 6541–6598 (TKTT…TSTS), 6846–6867 (TTGTSSHNTLGLSSSVDTTKTT), 6946–6971 (ITTTETTSHSTPSITSSVTTAERTSH), 6999–7021 (TTESTSHSNPSLTSAITTTETRS), 7067–7093 (TTETTSHSPPSFTSSISITETPSHSPP), 7170–7206 (TETASHSNPSSTSSITTTESTSHSPPRSTSAIATTGI), 7225–7244 (SHSTASFTSSITSTETISHS), 7299–7329 (FTSSITTTESTSQSTPSFTFSTTSTETTSHS), 7400–7433 (SYTSSITTTETPSHSSPSFPSTITSTETISHRTP), 7476–7532 (TETI…TTST), 7578–7600 (TGTSSHSTLGLSSSVTTTKTTSH), 7731–7766 (TEITSHSPPSFTSSSTTTETPSHSTPGFSSSIATSK), 7922–7996 (SHST…PPIF), 8036–8066 (TTETNSHSPPSFTSSIATTETPSHSPPSFTS), 8088–8113 (TESTSHSTPSFTSSIATTETTSHTPP), 8372–8397 (TETPSHSTPSFPSSITTTQSASHSTP), 8457–8514 (TKTT…TSTS), 8762–8783 (TTGTSSHNTLGLSSSVDTTKTT), 8862–8887 (ITTTETTSHSTPSITSSVTTAERTSH), 8915–8941 (TTESTSHSNPSLTSAITTTETRSHSPP), 8983–9009 (TTETTSHSPPSFTSSISITETPSHSPP), 9052–9122 (AETT…TTGI), 9141–9160 (SHSTASFTSSITSTETISHS), 9215–9240 (FTSSITTTESTSQSTPSFTFSTTSTE), 9335–9366 (TSSITTTETPSHSSPSFPSSITSTETISHRTP), 9409–9465 (TETI…TTST), 9566–9589 (SHSTPSFTSSITTTKSTSHSNPSL), 9612–9674 (TTET…PPSF), 9734–9760 (TTSHGTPSLTSLIATTKSTPQNPSSFT), 9828–9859 (TSSITTTETTSHSTPRITSSITTTEKTSHSTP), 9883–9908 (TTTESTSHSNPSLTSAITNTETRSHS), 9921–9973 (TTSH…SKTI), 10076–10099 (SDSTPSFTSSVTTTETTSQSSPSF), 10120–10166 (ITTT…TVPS), 10189–10285 (ITTE…SPLS), 10389–10425 (TSSIATSETPSHSTPSFPSSITTTQSISHSTPSLSSA), 10462–10481 (TTKTTSHSPPSFTASITSTK), 10501–10537 (SHSSPSFTSSSTTTEIPSHSTPGFSSSIATSKTTSTS), 10640–10660 (TTSFPSSITTTETTSHSTPSF), 10750–10828 (TTTE…QRSP), 10887–11032 (TTET…SPSS), 11044–11065 (SHSTPSFTSSITSPETISHSTP), 11276–11317 (TGTE…SPSH), 11446–11482 (STTATPPDSTPSFTSSIATTENTSHSTPSFTSSITTT), 11566–11697 (TTET…PGFS), 11754–11779 (TKTTSHSTPDFTSSIASTKTTSHSTP), 11818–11949 (SIAT…HSPP), 12067–12103 (TSSFTSSITTTETTSQSTPSFTSSIAVTETPSDSTPV), 12186–12220 (PSYTSSIITTKTPSHSTPSFPSSITTTETISHSTP), 12280–12323 (TETT…STPI), 12364–12452 (TTET…TTET), 12468–12578 (EMTS…NTPS), 12616–12639 (FTTAETGVTSTPSSPSSLSTDIPT), 12681–12700 (SSPSIQSTETSSLVGTTSPT), 12785–12805 (IPSTHSSTLQTTPSIPSLQTS), 12985–13011 (TSSMTPESESSIIPNASSSTGTGTVPT), and 13052–13086 (SLPTILRTSSKSTHPSPPTARTSETSVATTQTPTT). Low complexity-rich tracts occupy residues 513 to 538 (SMTTTASGPTTTNTLSSLTSSILSST) and 547 to 559 (TSHTTTTTPPSTL). A compositionally biased stretch (low complexity) spans 1620 to 1638 (TSTPPITSSVTPTNTVTSM). The segment covering 1944-1956 (TTSATMEPPSSSV) has biased composition (polar residues). The span at 1957–1968 (AATDTGQTTFTS) shows a compositional bias: low complexity. The span at 2066–2091 (NASSMTTSETTYPNSPTGPVTNSMSK) shows a compositional bias: polar residues. Low complexity predominate over residues 2096–2107 (ASMTQTSSTATS). A compositionally biased stretch (polar residues) spans 2113 to 2123 (PSGSTTEIAKS). Positions 2170 to 2185 (STSMTPSTVSTSIPTS) are enriched in low complexity. The segment covering 2186–2195 (QPKTVNSSSG) has biased composition (polar residues). 2 stretches are compositionally biased toward low complexity: residues 2292 to 2308 (SSPPATTSTLHTTAEST) and 2442 to 2458 (RSTPTSETTYPTSPTST). Residues 2591–2603 (SAMSTSDIPSSPS) show a composition bias toward low complexity. 2 stretches are compositionally biased toward low complexity: residues 2929–2944 (STDIPTSQPTTITPSS) and 3074–3097 (ETPSSTVATTGTGQTTFTSSTATS). Positions 3098–3109 (PETNTLTPTPDI) are enriched in polar residues. The span at 3309 to 3359 (TTSHSTPSFTSPIATTKTSSHSSPSFTSSIATLETTSHSTPSFTSSITTNS) shows a compositional bias: low complexity. The span at 3360–3370 (HSTPRFSSSIA) shows a compositional bias: polar residues. Residues 3371–3385 (TRETTSHSTSSFTPS) show a composition bias toward low complexity. A compositionally biased stretch (polar residues) spans 3386-3395 (IATTKTNSNS). The segment covering 3420 to 3452 (ITTTETTSHSTPSFTSSMATTKTTSHSTPSFTS) has biased composition (low complexity). The segment covering 3453–3462 (PIATRETTSH) has biased composition (polar residues). Over residues 3463–3481 (STPSFTSLITTTKTTSHST) the composition is skewed to low complexity. Residues 3740–3749 (ITTIETPSHG) show a composition bias toward polar residues. Residues 3750-3785 (TPSFTSSITSTETTSHSSPSFISSITTTEITSHSTP) show a composition bias toward low complexity. Residues 3786–3812 (RFTSSITTMETPSHSTPNFTSSITTAE) show a composition bias toward polar residues. 2 stretches are compositionally biased toward low complexity: residues 4020 to 4042 (STPSYTSAITTTETTSHRTPSFT) and 4067 to 4096 (TSNSTASLTSSMTTTETTSHSTPSLTSSMT). Residues 4097–4106 (ATETTSHSTP) show a composition bias toward polar residues. 2 stretches are compositionally biased toward low complexity: residues 4182 to 4228 (TTET…PSFT) and 4237 to 4249 (TSHSTPSFTSSIT). Over residues 4557–4574 (TETTSNSSPSFTSSITNT) the composition is skewed to low complexity. A compositionally biased stretch (polar residues) spans 4575–4601 (KTTSYSPPGFTSSIPATETTSRSPPGF). Over residues 4602–4617 (TSSITTTETTSHSTSS) the composition is skewed to low complexity. Positions 4802-4827 (TSSFTSSITSTETTSHSTPSLTSSIT) are enriched in low complexity. The segment covering 5137-5158 (TPSHITPSFTSTITTSESTSHS) has biased composition (low complexity). The segment covering 5159-5170 (NPSLTSAITTTE) has biased composition (polar residues). Composition is skewed to low complexity over residues 5174–5203 (HSPPIFTSSITTTETTSHNTPSFTSSITTT) and 5458–5486 (TESTSRSTPSFTFSTTSTETTSHSTPSFT). A compositionally biased stretch (low complexity) spans 5834–5858 (TTSYSTPSITSSITTTERTSHSTPS). Residues 5859–5874 (YTSSIATRETPSHTVP) are compositionally biased toward polar residues. Residues 5875–5889 (SFTSSITTTESTSHS) are compositionally biased toward low complexity. A compositionally biased stretch (polar residues) spans 5890–5901 (NPSLTSAITTTE). The segment covering 6045–6059 (SFTSSITTTDSTSHS) has biased composition (low complexity). Residues 6060 to 6071 (NPSLTSAITTTE) are compositionally biased toward polar residues. Over residues 6172-6185 (TESTSHSTPSFTSS) the composition is skewed to low complexity. Over residues 6186–6197 (IATTETTSHTPP) the composition is skewed to polar residues. Over residues 6456 to 6475 (TETPSHSTPSFPSSITTTQS) the composition is skewed to low complexity. A compositionally biased stretch (polar residues) spans 6852-6867 (HNTLGLSSSVDTTKTT). The span at 6946–6965 (ITTTETTSHSTPSITSSVTT) shows a compositional bias: low complexity. Positions 6999–7018 (TTESTSHSNPSLTSAITTTE) are enriched in polar residues. The segment covering 7172–7206 (TASHSNPSSTSSITTTESTSHSPPRSTSAIATTGI) has biased composition (low complexity). 2 stretches are compositionally biased toward low complexity: residues 7300–7329 (TSSITTTESTSQSTPSFTFSTTSTETTSHS) and 7400–7427 (SYTSSITTTETPSHSSPSFPSTITSTET). A compositionally biased stretch (polar residues) spans 7476 to 7491 (TETISHSPPSFTSLTN). Positions 7492 to 7532 (STETTSHSPPSFTSSSTTTETPSHSTPGFSSSIATSKTTST) are enriched in low complexity. Low complexity-rich tracts occupy residues 7734–7766 (TSHSPPSFTSSSTTTETPSHSTPGFSSSIATSK) and 7922–7944 (SHSTRSITSSITTTKRTSHSTPS). The segment covering 7945–7987 (YTSSIATSETPSHTVPSFTSLITTTDSTSHSNPSLTSAITTTE) has biased composition (polar residues). Residues 8088–8101 (TESTSHSTPSFTSS) show a composition bias toward low complexity. Over residues 8102–8113 (IATTETTSHTPP) the composition is skewed to polar residues. Low complexity predominate over residues 8372–8391 (TETPSHSTPSFPSSITTTQS). Residues 8768–8783 (HNTLGLSSSVDTTKTT) are compositionally biased toward polar residues. Residues 8862-8881 (ITTTETTSHSTPSITSSVTT) show a composition bias toward low complexity. Positions 8915 to 8934 (TTESTSHSNPSLTSAITTTE) are enriched in polar residues. 2 stretches are compositionally biased toward low complexity: residues 9067–9081 (PTTETTSHSPPSFTS) and 9088–9122 (TASHSNPSSTSSITTTESTSHSPPRSTSAIATTGI). Over residues 9335-9360 (TSSITTTETPSHSSPSFPSSITSTET) the composition is skewed to low complexity. Residues 9409-9424 (TETISHSPPSFTSLTN) are compositionally biased toward polar residues. 3 stretches are compositionally biased toward low complexity: residues 9425–9465 (STET…TTST), 9566–9585 (SHSTPSFTSSITTTKSTSHS), and 9612–9624 (TTETTSHRTPSFT). Over residues 9625–9661 (SSIATAETTSHSPPSFTSLITTSETPSHSNPSFTSLI) the composition is skewed to polar residues. Positions 9662 to 9674 (TTTESTSHSPPSF) are enriched in low complexity. 2 stretches are compositionally biased toward polar residues: residues 9892–9903 (NPSLTSAITNTE) and 9921–9933 (TTSHSPPSFTSLI). Residues 9934 to 9973 (TSTETTSHSPPSFTSSSTTTETPSHSTPGFSSSIATSKTI) show a composition bias toward low complexity. The segment covering 10120 to 10130 (ITTTETTSHST) has biased composition (low complexity). Residues 10131–10166 (PNITSSVTTTERTSHSTPSYTSSIATGETPSHTVPS) show a composition bias toward polar residues. 2 stretches are compositionally biased toward low complexity: residues 10196–10271 (HSPP…SFTS) and 10394–10421 (TSETPSHSTPSFPSSITTTQSISHSTPS). A compositionally biased stretch (polar residues) spans 10750–10791 (TTTETTSHSPPRFTSSITTTKTPSDSTPVFTPSIATSETSSH). Composition is skewed to low complexity over residues 10792–10828 (STPGYTSSTATTETMSHSTSSFTSSITTTETTSQRSP), 10887–10937 (TTET…SSIT), and 10950–11032 (PSSI…SPSS). Residues 11278–11291 (TETTSHSPPHFTSS) show a composition bias toward low complexity. Residues 11292 to 11317 (ITRTKTTSHRPPTFTSSITTTESPSH) show a composition bias toward polar residues. Low complexity predominate over residues 11566 to 11682 (TTETTSHSIP…SHSTSGFTSS (117 aa)). 2 stretches are compositionally biased toward polar residues: residues 11683–11697 (NATTETTSHSTPGFS) and 11754–11769 (TKTTSHSTPDFTSSIA). Composition is skewed to low complexity over residues 11770-11779 (STKTTSHSTP) and 11818-11880 (SIAT…SHST). 2 stretches are compositionally biased toward polar residues: residues 11881–11896 (PSFTSSIATIETTSHS) and 11903–11912 (LIPTTKTTLH). Low complexity-rich tracts occupy residues 11913-11949 (SPPSFTSSITTTKTTSHSTSSLTSSMPTTKTTSHSPP) and 12067-12091 (TSSFTSSITTTETTSQSTPSFTSSI). The segment covering 12092–12103 (AVTETPSDSTPV) has biased composition (polar residues). Residues 12280–12309 (TETTSHSAPNFSSSITSTETTSHSTPSFTS) are compositionally biased toward low complexity. Polar residues predominate over residues 12310–12323 (AITSTETTSHSTPI). Over residues 12364 to 12412 (TTETTSHSTPGFASSITTTKTTSHSTPSFTSSIATSNTTSSSTPGFTSS) the composition is skewed to low complexity. Over residues 12413–12439 (IATTETTSRSTPGFTSSIVTTETTSPH) the composition is skewed to polar residues. Residues 12440–12452 (TPGFTSSITTTET) show a composition bias toward low complexity. Over residues 12468 to 12477 (EMTSHSTPSL) the composition is skewed to polar residues. 6 stretches are compositionally biased toward low complexity: residues 12478-12569 (TFSI…VTTP), 12624-12639 (TSTPSSPSSLSTDIPT), 12681-12692 (SSPSIQSTETSS), 12794-12805 (QTTPSIPSLQTS), 12990-13003 (PESESSIIPNASSS), and 13073-13086 (TSETSVATTQTPTT). The region spanning 13130 to 13163 (SGDRCQLQTRCQNGGQWDGLKCQCPSTFYGSSCE) is the EGF-like domain. Cystine bridges form between cysteine 13134-cysteine 13140 and cysteine 13153-cysteine 13162. Residues 13172–13297 (DVVETEVGME…DSIKVNNNSK (126 aa)) form the SEA domain. Residues 13381–13401 (LVGGLTAGAALLVLLLLALGV) traverse the membrane as a helical segment.

Post-translationally, highly O-glycosylated and probably also N-glycosylated. In terms of tissue distribution, fetal and adult small intestine and fetal and adult colon.

It localises to the membrane. In terms of biological role, major glycoprotein component of a variety of mucus gels. Thought to provide a protective, lubricating barrier against particles and infectious agents at mucosal surfaces. The polypeptide is Mucin-3B (Homo sapiens (Human)).